The chain runs to 137 residues: MIWKRHMTLEALNATSVGTMVEHLGIVYTRLGDDLLEATMPVDTRTHQPFGLLHGGASAALAETLGSMAGYLTTRDGQCVVGTEISASHHRAVSQGQVRGVCQPLHLGRQSQCWEIVIYDEQGRRCCTSRLSTAILG.

Catalysis depends on E63, which acts as the Nucleophile or proton acceptor.

The protein belongs to the thioesterase PaaI family. As to quaternary structure, homotetramer. Dimer of dimers. Interacts specifically with the aryl carrier protein (ArCP) domain of EntB.

The protein localises to the cytoplasm. It participates in siderophore biosynthesis; enterobactin biosynthesis. Required for optimal enterobactin synthesis. Acts as a proofreading enzyme that prevents EntB misacylation by hydrolyzing the thioester bound existing between EntB and wrongly charged molecules. This is Proofreading thioesterase EntH from Cronobacter sakazakii (strain ATCC BAA-894) (Enterobacter sakazakii).